Consider the following 420-residue polypeptide: Putative sporulation-specific glycosylase YdhD (420 aa).

2 LysM domains span residues 2–45 (FIHI…ALLI) and 48–92 (YVYT…KITI). Positions 100-420 (AGTLSFYVLR…LRKFFTIRKV (321 aa)) constitute a GH18 domain. Glutamate 212 serves as the catalytic Proton donor.

It belongs to the glycosyl hydrolase 18 family. Chitinase class II subfamily.

The protein localises to the spore wall. The polypeptide is Putative sporulation-specific glycosylase YdhD (ydhD) (Bacillus subtilis (strain 168)).